Consider the following 136-residue polypeptide: HetP-like commitment protein Alr2902 (136 aa).

Residues 94–109 (KASTQDLNQSNNSDYL) are compositionally biased toward polar residues. The segment at 94–120 (KASTQDLNQSNNSDYLTTPEPDKRGNI) is disordered.

This sequence belongs to the HetP family. In terms of assembly, in bacterial two-hybrid assays interacts robustly with HetR and Alr3234 and weakly with itself, HetP and Asl1930.

In terms of biological role, delays heterocyst differentiation and commitment when nitrogen is limiting. Interplay between the 4 HetP paralogs controls the timing of commitment to heterocyst formation and its duration. Epistatic analysis show that the 3 paralogs act upstream of hetP to delay commitment (asl1930, alr3234) or inhibit development (alr2902). Asl1930 and Alr3234 must also attenuate the activity of Alr2902. When only this homolog is present no heterocysts are formed, showing it inhibits development. Ectopic expression partially complements a hetP deletion. In Nostoc sp. (strain PCC 7120 / SAG 25.82 / UTEX 2576), this protein is HetP-like commitment protein Alr2902.